Reading from the N-terminus, the 242-residue chain is N-alpha-acetyltransferase 60 (242 aa).

Residues 1–192 lie on the Cytoplasmic side of the membrane; sequence MTEVVPSSAL…GGHPPWTILD (192 aa). An N-acetyltransferase domain is found at 13–182; it reads VSLRLLCHDD…DGFTYVLYIN (170 aa). Tyr38 provides a ligand contact to substrate. At Lys79 the chain carries N6-acetyllysine; by autocatalysis. The active site involves Tyr97. Leu99 serves as a coordination point for substrate. 101–103 is a binding site for acetyl-CoA; sequence LGV. N6-acetyllysine; by autocatalysis occurs at positions 105, 109, and 121. Acetyl-CoA is bound at residue 109–114; sequence KHGIGS. His138 is a catalytic residue. Residues Asn143 and 150–153 contribute to the acetyl-CoA site; that span reads YENR. An N6-acetyllysine; by autocatalysis modification is found at Lys156. A required for homodimerization region spans residues 162 to 173; that stretch reads PYYYSIRGVLKD. Tyr165 serves as a coordination point for substrate. Positions 193-236 form an intramembrane region, helical; sequence YIQHLGSALASLSPCSIPHRVYRQAHSLLCSFLPWSGISSKSGI. Residues 237–242 lie on the Cytoplasmic side of the membrane; sequence EYSRTM.

This sequence belongs to the acetyltransferase family. NAA60 subfamily. In terms of assembly, monomer and homodimer; monomer in presence of substrate and homodimer in its absence. In terms of processing, acetylated: autoacetylation is required for optimal acetyltransferase activity.

The protein localises to the golgi apparatus membrane. It carries out the reaction N-terminal L-methionyl-[transmembrane protein] + acetyl-CoA = N-terminal N(alpha)-acetyl-L-methionyl-[transmembrane protein] + CoA + H(+). The catalysed reaction is L-lysyl-[protein] + acetyl-CoA = N(6)-acetyl-L-lysyl-[protein] + CoA + H(+). In terms of biological role, N-alpha-acetyltransferase that specifically mediates the acetylation of N-terminal residues of the transmembrane proteins, with a strong preference for N-termini facing the cytosol. Displays N-terminal acetyltransferase activity towards a range of N-terminal sequences including those starting with Met-Lys, Met-Val, Met-Ala and Met-Met. Required for normal chromosomal segregation during anaphase. May also show histone acetyltransferase activity; such results are however unclear in vivo and would require additional experimental evidences. This Homo sapiens (Human) protein is N-alpha-acetyltransferase 60.